The primary structure comprises 239 residues: Pyridoxine 5'-phosphate synthase (239 aa).

Asn7 is a 3-amino-2-oxopropyl phosphate binding site. 9-10 contacts 1-deoxy-D-xylulose 5-phosphate; that stretch reads DH. Arg18 contacts 3-amino-2-oxopropyl phosphate. His43 functions as the Proton acceptor in the catalytic mechanism. Residues Arg45 and His50 each contribute to the 1-deoxy-D-xylulose 5-phosphate site. The active-site Proton acceptor is the Glu70. A 1-deoxy-D-xylulose 5-phosphate-binding site is contributed by Thr100. His191 (proton donor) is an active-site residue. 3-amino-2-oxopropyl phosphate is bound by residues Gly192 and 213–214; that span reads GH.

Belongs to the PNP synthase family. As to quaternary structure, homooctamer; tetramer of dimers.

It localises to the cytoplasm. It catalyses the reaction 3-amino-2-oxopropyl phosphate + 1-deoxy-D-xylulose 5-phosphate = pyridoxine 5'-phosphate + phosphate + 2 H2O + H(+). It participates in cofactor biosynthesis; pyridoxine 5'-phosphate biosynthesis; pyridoxine 5'-phosphate from D-erythrose 4-phosphate: step 5/5. Functionally, catalyzes the complicated ring closure reaction between the two acyclic compounds 1-deoxy-D-xylulose-5-phosphate (DXP) and 3-amino-2-oxopropyl phosphate (1-amino-acetone-3-phosphate or AAP) to form pyridoxine 5'-phosphate (PNP) and inorganic phosphate. The chain is Pyridoxine 5'-phosphate synthase from Trichlorobacter lovleyi (strain ATCC BAA-1151 / DSM 17278 / SZ) (Geobacter lovleyi).